A 452-amino-acid chain; its full sequence is MASTSTSANGGSTNASIVSQPVVFTTQTQYPLPYQKYMIPTTWRRYQLSQLVNKALSLVKPVPFDFLIKGEIIRGSLAEWCSEHGVGEEETLEIEYIESVMPPQKMSEIPHEDWVSSVSCQLPRYFLTASYDGNLRAFDLSKNLTASIPAHPAPITSLCLVSSSLLDDNSQQIVIASASHDLTARLTQVALNPMASTNESKAMASLHLHTAPVSSISANAAGTHVLTASWDGLIGYWDATVPSTDEVPEPALNERDRSKKRRRVEEGEVKAKRKAPLSVFKSHTARVSKVLFASGAGETAYSCGFDSTVRRWDTETGVCSHTITASEKPFLDMALTPDGNSALATSTDRSMTLYDLRSSTTILTSASNTYMHPSTPSCVATSATNSHQVVTGAYDGVVRIWDLRSPKSAMATFKPWSGSGQKVLSVDWKRGIVGVGGERGLEMWKVGEEQKV.

The segment at 17–98 (IVSQPVVFTT…EETLEIEYIE (82 aa)) is ubiquitin-like (UBL) domain. WD repeat units lie at residues 110–148 (PHEDWVSSVSCQLPRYFLTASYDGNLRAFDLSKNLTASI), 150–195 (AHPA…NPMA), and 208–247 (LHTAPVSSISANAAGTHVLTASWDGLIGYWDATVPSTDEV). A disordered region spans residues 245–269 (DEVPEPALNERDRSKKRRRVEEGEV). Over residues 252–269 (LNERDRSKKRRRVEEGEV) the composition is skewed to basic and acidic residues. WD repeat units lie at residues 282-322 (SHTA…CSHT), 325-364 (ASEKPFLDMALTPDGNSALATSTDRSMTLYDLRSSTTILT), 371-411 (MHPS…SAMA), and 418-452 (GSGQKVLSVDWKRGIVGVGGERGLEMWKVGEEQKV).

This sequence belongs to the WD repeat WDR12/YTM1 family. As to quaternary structure, component of the NOP7 complex, composed of ERB1, NOP7 and YTM1. The complex is held together by ERB1, which interacts with NOP7 via its N-terminal domain and with YTM1 via a high-affinity interaction between the seven-bladed beta-propeller domains of the 2 proteins. The NOP7 complex associates with the 66S pre-ribosome. Interacts (via UBL domain) with MDN1 (via VWFA/MIDAS domain).

It localises to the nucleus. Its subcellular location is the nucleolus. The protein resides in the nucleoplasm. In terms of biological role, component of the NOP7 complex, which is required for maturation of the 25S and 5.8S ribosomal RNAs and formation of the 60S ribosome. The chain is Ribosome biogenesis protein YTM1 from Laccaria bicolor (strain S238N-H82 / ATCC MYA-4686) (Bicoloured deceiver).